The chain runs to 389 residues: Tryptophan synthase beta chain 1 (389 aa).

Lysine 84 is subject to N6-(pyridoxal phosphate)lysine.

This sequence belongs to the TrpB family. In terms of assembly, tetramer of two alpha and two beta chains. Requires pyridoxal 5'-phosphate as cofactor.

It is found in the plastid. The protein resides in the chloroplast. The catalysed reaction is (1S,2R)-1-C-(indol-3-yl)glycerol 3-phosphate + L-serine = D-glyceraldehyde 3-phosphate + L-tryptophan + H2O. It participates in amino-acid biosynthesis; L-tryptophan biosynthesis; L-tryptophan from chorismate: step 5/5. Its function is as follows. The beta subunit is responsible for the synthesis of L-tryptophan from indole and L-serine. The protein is Tryptophan synthase beta chain 1 (TSB1) of Zea mays (Maize).